The following is a 95-amino-acid chain: DASH complex subunit DAD3 (95 aa).

Belongs to the DASH complex DAD3 family. As to quaternary structure, component of the DASH complex consisting of ASK1, DAD1, DAD2, DAD3, DAD4, DAM1, DUO1, HSK3, SPC19 and SPC34, with a stoichiometry of one copy of each subunit per complex. Multiple DASH complexes oligomerize to form a ring that encircles spindle microtubules and organizes the rod-like NDC80 complexes of the outer kinetochore. DASH complex oligomerization strengthens microtubule attachments. On cytoplasmic microtubules, DASH complexes appear to form patches instead of rings.

It is found in the chromosome. Its subcellular location is the centromere. The protein resides in the kinetochore. It localises to the cytoplasm. The protein localises to the cytoskeleton. It is found in the spindle. Its subcellular location is the nucleus. Component of the DASH complex that connects microtubules with kinetochores and couples microtubule depolymerisation to chromosome movement; it is involved in retrieving kinetochores to the spindle poles before their re-orientation on the spindle in early mitosis and allows microtubule depolymerization to pull chromosomes apart and resist detachment during anaphase. Kinetochores, consisting of a centromere-associated inner segment and a microtubule-contacting outer segment, play a crucial role in chromosome segregation by mediating the physical connection between centromeric DNA and microtubules. Kinetochores also serve as an input point for the spindle assembly checkpoint, which delays anaphase until all chromosomes have bioriented on the mitotic spindle. This Chaetomium thermophilum (strain DSM 1495 / CBS 144.50 / IMI 039719) (Thermochaetoides thermophila) protein is DASH complex subunit DAD3.